The following is a 1024-amino-acid chain: Importin-8 (1024 aa).

The 81-residue stretch at 22-102 (AENELNQSYK…RENMVEAIIR (81 aa)) folds into the Importin N-terminal domain. The interval 896-969 (FGRAQGSEEE…YSTPLDCDNG (74 aa)) is disordered. Composition is skewed to acidic residues over residues 902–917 (SEEE…EDEV) and 934–952 (DNED…DEGL).

This sequence belongs to the importin beta family.

The protein localises to the cytoplasm. It localises to the nucleus. Involved in nuclear protein import, either by acting as autonomous nuclear transport receptor or as an adapter-like protein in association with the importin-beta subunit KPNB1. Acting autonomously, may serve as receptor for nuclear localization signals (NLS) and promote translocation of import substrates through the nuclear pore complex (NPC) by an energy requiring, Ran-dependent mechanism. At the nucleoplasmic side of the NPC, Ran binds to importin, the importin/substrate complex dissociates and importin is re-exported from the nucleus to the cytoplasm where GTP hydrolysis releases Ran. The directionality of nuclear import is thought to be conferred by an asymmetric distribution of the GTP- and GDP-bound forms of Ran between the cytoplasm and nucleus. In vitro mediates the nuclear import of the signal recognition particle protein SRP19. May also be involved in cytoplasm-to-nucleus shuttling of a broad spectrum of other cargos, including Argonaute-microRNAs complexes, the JUN protein, RELA/NF-kappa-B p65 subunit, the translation initiation factor EIF4E and a set of receptor-activated mothers against decapentaplegic homolog (SMAD) transcription factors that play a critical role downstream of the large family of transforming growth factor beta and bone morphogenetic protein (BMP) cytokines. This Danio rerio (Zebrafish) protein is Importin-8 (ipo8).